The chain runs to 640 residues: Fructose-1,6-bisphosphatase class 3 (640 aa).

It belongs to the FBPase class 3 family. The cofactor is Mn(2+).

It carries out the reaction beta-D-fructose 1,6-bisphosphate + H2O = beta-D-fructose 6-phosphate + phosphate. The protein operates within carbohydrate biosynthesis; gluconeogenesis. The polypeptide is Fructose-1,6-bisphosphatase class 3 (Lactococcus lactis subsp. lactis (strain IL1403) (Streptococcus lactis)).